The primary structure comprises 405 residues: Arginine biosynthesis bifunctional protein ArgJ (405 aa).

The substrate site is built by threonine 152, lysine 178, threonine 189, glutamate 276, asparagine 400, and threonine 405. The active-site Nucleophile is the threonine 189.

Belongs to the ArgJ family. In terms of assembly, heterotetramer of two alpha and two beta chains.

The protein resides in the cytoplasm. The catalysed reaction is N(2)-acetyl-L-ornithine + L-glutamate = N-acetyl-L-glutamate + L-ornithine. It catalyses the reaction L-glutamate + acetyl-CoA = N-acetyl-L-glutamate + CoA + H(+). It participates in amino-acid biosynthesis; L-arginine biosynthesis; L-ornithine and N-acetyl-L-glutamate from L-glutamate and N(2)-acetyl-L-ornithine (cyclic): step 1/1. Its pathway is amino-acid biosynthesis; L-arginine biosynthesis; N(2)-acetyl-L-ornithine from L-glutamate: step 1/4. Catalyzes two activities which are involved in the cyclic version of arginine biosynthesis: the synthesis of N-acetylglutamate from glutamate and acetyl-CoA as the acetyl donor, and of ornithine by transacetylation between N(2)-acetylornithine and glutamate. This chain is Arginine biosynthesis bifunctional protein ArgJ, found in Pseudomonas fluorescens (strain ATCC BAA-477 / NRRL B-23932 / Pf-5).